A 166-amino-acid polypeptide reads, in one-letter code: Photosystem I assembly protein Ycf3 (166 aa).

3 TPR repeats span residues 35–68 (AFVY…EVDP), 72–105 (SFIF…NPSL), and 120–153 (GEQA…APLN).

Belongs to the Ycf3 family.

It is found in the plastid. The protein resides in the chloroplast thylakoid membrane. Essential for the assembly of the photosystem I (PSI) complex. May act as a chaperone-like factor to guide the assembly of the PSI subunits. This chain is Photosystem I assembly protein Ycf3, found in Ostreococcus tauri.